Reading from the N-terminus, the 575-residue chain is Glycine--tRNA ligase (575 aa).

Residues arginine 96 and glutamate 162 each contribute to the substrate site. ATP contacts are provided by residues 194–196 (RNE), 204–209 (IRLREF), 327–328 (EC), and 450–453 (GIDR). Position 209 to 213 (209 to 213 (FTQAE)) interacts with substrate. Substrate is bound at residue 446–450 (EPSYG).

This sequence belongs to the class-II aminoacyl-tRNA synthetase family.

It is found in the cytoplasm. It carries out the reaction tRNA(Gly) + glycine + ATP = glycyl-tRNA(Gly) + AMP + diphosphate. Its function is as follows. Catalyzes the attachment of glycine to tRNA(Gly). This is Glycine--tRNA ligase from Methanococcus maripaludis (strain C5 / ATCC BAA-1333).